The sequence spans 128 residues: MSAWLDEIRWTADGLVPVVAQEAGTGQVLMVAWMNREALALTAAEGYAVYWSRSRGRLWRKGEESGHRQKVLEIRIDCDEDVVLLKVEQAGGIACHTGRHHCFYRVLQDGRWVTVEPVLKPPDSIYGA.

D77 contributes to the Mg(2+) binding site. Residue C78 coordinates Zn(2+). D79 and D81 together coordinate Mg(2+). Zn(2+)-binding residues include C95 and C102.

The protein belongs to the PRA-CH family. In terms of assembly, homodimer. The cofactor is Mg(2+). Requires Zn(2+) as cofactor.

The protein localises to the cytoplasm. The catalysed reaction is 1-(5-phospho-beta-D-ribosyl)-5'-AMP + H2O = 1-(5-phospho-beta-D-ribosyl)-5-[(5-phospho-beta-D-ribosylamino)methylideneamino]imidazole-4-carboxamide. Its pathway is amino-acid biosynthesis; L-histidine biosynthesis; L-histidine from 5-phospho-alpha-D-ribose 1-diphosphate: step 3/9. Catalyzes the hydrolysis of the adenine ring of phosphoribosyl-AMP. The chain is Phosphoribosyl-AMP cyclohydrolase from Methylococcus capsulatus (strain ATCC 33009 / NCIMB 11132 / Bath).